The sequence spans 337 residues: Protein MICROTUBULE BINDING PROTEIN 2C (337 aa).

Positions 80 to 147 are disordered; it reads RGSMTYTKMP…STSSLTEKDR (68 aa). Over residues 89-103 the composition is skewed to basic and acidic residues; sequence PSRESLYKKTSEVKG. Residues 120 to 142 show a composition bias toward polar residues; the sequence is KNVSSSQDGYAENFSTPSSTSSL. Coiled coils occupy residues 143–194, 223–250, and 294–314; these read TEKD…MKKD, VEKLEWEAMTSSKKVERLQEDLDLLQGE, and LQKMEAAREAYIAAVAAAKEN.

Belongs to the microtubule binding protein 2C family. In terms of assembly, interacts with KN-1. Binds to tobacco mosaic virus movement protein (TMV-MP) at microtubules. As to expression, constitutively expressed in leaves.

The protein resides in the cytoplasm. It is found in the cytoskeleton. In terms of biological role, prevents homeodomain proteins (e.g. STM) association to plasmodesmata and, consequently, cell-to-cell transport. Binds to RNA. Alters KN1 RNA-binding capacity. Regulates cytoskeleton (e.g. actin) organization that determinates cell shape. Interferes with cell-to-cell transport of tobacco mosaic virus movement protein (TMV-MP) by mediating its accumulation at microtubules, thus interfering with cell-to-cell virus movement. The protein is Protein MICROTUBULE BINDING PROTEIN 2C of Nicotiana tabacum (Common tobacco).